The primary structure comprises 694 residues: Methionine--tRNA ligase (694 aa).

Residues 14–24 (PYANGPIHLGH) carry the 'HIGH' region motif. Residues C145, C148, C158, and C161 each coordinate Zn(2+). Residues 330 to 334 (KMSKS) carry the 'KMSKS' region motif. K333 provides a ligand contact to ATP. The disordered stretch occupies residues 558–579 (SLQATAGQPEPHSQVRHAEHQQ). The tRNA-binding domain occupies 593 to 694 (DFAKVDLRIA…EGAQPGMKVK (102 aa)).

It belongs to the class-I aminoacyl-tRNA synthetase family. MetG type 1 subfamily. In terms of assembly, homodimer. It depends on Zn(2+) as a cofactor.

It localises to the cytoplasm. It carries out the reaction tRNA(Met) + L-methionine + ATP = L-methionyl-tRNA(Met) + AMP + diphosphate. In terms of biological role, is required not only for elongation of protein synthesis but also for the initiation of all mRNA translation through initiator tRNA(fMet) aminoacylation. The protein is Methionine--tRNA ligase of Methylococcus capsulatus (strain ATCC 33009 / NCIMB 11132 / Bath).